We begin with the raw amino-acid sequence, 484 residues long: CUGBP Elav-like family member 2 (484 aa).

Necessary for nuclear export stretches follow at residues 1 to 89 and 90 to 178; these read MNGA…PGMH and HPIQ…EGCS. RRM domains are found at residues 16–99, 108–188, and 399–477; these read IKTF…PADS, RKLF…FADT, and ANLF…LKRS. Residues 188 to 240 form a necessary for splicing activity region; it reads TQKDKEQRRLQQQLAQQMQQLNTATWGNLTGLGGLTPQYLALLQQATSSSNLG. The segment at 347–399 is necessary for nuclear localization; it reads GLTNGTAGTMDALTQAYSGIQQYAAAALPTLYSQSLLQQQSAAGSQKEGPEGA. The interval 426–484 is necessary for nuclear localization and splicing activity; it reads ISAKVFIDKQTNLSKCFGFVSYDNPVSAQAAIQAMNGFQIGMKRLKVQLKRSKNDSKPY.

The protein belongs to the CELF/BRUNOL family. As to expression, expressed in heart.

The protein resides in the nucleus. It localises to the cytoplasm. Its function is as follows. RNA-binding protein implicated in the regulation of several post-transcriptional events. May be involved in mRNA translation repression and stability. Mediates exon inclusion in TNNT2 pre-mRNA. This Gallus gallus (Chicken) protein is CUGBP Elav-like family member 2 (CELF2).